The sequence spans 301 residues: Glycine--tRNA ligase alpha subunit (301 aa).

The protein belongs to the class-II aminoacyl-tRNA synthetase family. As to quaternary structure, tetramer of two alpha and two beta subunits.

It localises to the cytoplasm. The catalysed reaction is tRNA(Gly) + glycine + ATP = glycyl-tRNA(Gly) + AMP + diphosphate. This Shewanella baltica (strain OS223) protein is Glycine--tRNA ligase alpha subunit.